The following is a 604-amino-acid chain: Aspartate--tRNA(Asp/Asn) ligase (604 aa).

Glu174 serves as a coordination point for L-aspartate. Residues 198-201 (QLYK) are aspartate. Residue Arg220 participates in L-aspartate binding. ATP-binding positions include 220–222 (RDE) and Gln229. His460 contributes to the L-aspartate binding site. Residue Glu494 participates in ATP binding. Arg501 serves as a coordination point for L-aspartate. 546 to 549 (GLDR) contacts ATP.

This sequence belongs to the class-II aminoacyl-tRNA synthetase family. Type 1 subfamily. In terms of assembly, homodimer.

The protein resides in the cytoplasm. It catalyses the reaction tRNA(Asx) + L-aspartate + ATP = L-aspartyl-tRNA(Asx) + AMP + diphosphate. Its function is as follows. Aspartyl-tRNA synthetase with relaxed tRNA specificity since it is able to aspartylate not only its cognate tRNA(Asp) but also tRNA(Asn). Reaction proceeds in two steps: L-aspartate is first activated by ATP to form Asp-AMP and then transferred to the acceptor end of tRNA(Asp/Asn). The protein is Aspartate--tRNA(Asp/Asn) ligase of Paracidovorax citrulli (strain AAC00-1) (Acidovorax citrulli).